Consider the following 547-residue polypeptide: Chaperonin GroEL (547 aa).

ATP-binding positions include 30 to 33 (TLGP), lysine 51, 87 to 91 (DGTTT), glycine 415, and aspartate 496.

Belongs to the chaperonin (HSP60) family. In terms of assembly, forms a cylinder of 14 subunits composed of two heptameric rings stacked back-to-back. Interacts with the co-chaperonin GroES.

The protein localises to the cytoplasm. It catalyses the reaction ATP + H2O + a folded polypeptide = ADP + phosphate + an unfolded polypeptide.. In terms of biological role, together with its co-chaperonin GroES, plays an essential role in assisting protein folding. The GroEL-GroES system forms a nano-cage that allows encapsulation of the non-native substrate proteins and provides a physical environment optimized to promote and accelerate protein folding. The chain is Chaperonin GroEL from Histophilus somni (strain 129Pt) (Haemophilus somnus).